The following is a 205-amino-acid chain: LexA repressor (205 aa).

Residues 28-48 (VREIGEAVGLASSSTVHGHLA) constitute a DNA-binding region (H-T-H motif). Residues serine 127 and lysine 165 each act as for autocatalytic cleavage activity in the active site.

The protein belongs to the peptidase S24 family. In terms of assembly, homodimer. Post-translationally, following treatment with mitomycin C protein levels begin to decrease after a 5-min lag and do not return to their original levels for at least 90 minutes.

The catalysed reaction is Hydrolysis of Ala-|-Gly bond in repressor LexA.. In terms of biological role, represses dinA, dinB, dinC, recA genes and itself by binding to the 14 bp palindromic sequence 5'-CGAACNNNNGTTCG-3'; some genes have a tandem consensus sequence and their binding is cooperative. In the presence of single-stranded DNA, RecA interacts with LexA causing an autocatalytic cleavage which disrupts the DNA-binding part of LexA, leading to derepression of the SOS regulon and eventually DNA repair; autocleavage is maximal at pH 11 in the absence of RecA and ssDNA. This is LexA repressor from Bacillus subtilis (strain 168).